We begin with the raw amino-acid sequence, 799 residues long: Elongation factor G, mitochondrial (799 aa).

Residues 1–24 (MRCPSLARLPHRAVSGLTRTPVRF) constitute a mitochondrion transit peptide. The region spanning 97–384 (SRVRNIGIAA…GVIDYLPNPS (288 aa)) is the tr-type G domain. GTP contacts are provided by residues 106-113 (AHIDSGKT), 182-186 (DTPGH), and 236-239 (NKMD).

This sequence belongs to the TRAFAC class translation factor GTPase superfamily. Classic translation factor GTPase family. EF-G/EF-2 subfamily.

It is found in the mitochondrion. It participates in protein biosynthesis; polypeptide chain elongation. Mitochondrial GTPase that catalyzes the GTP-dependent ribosomal translocation step during translation elongation. During this step, the ribosome changes from the pre-translocational (PRE) to the post-translocational (POST) state as the newly formed A-site-bound peptidyl-tRNA and P-site-bound deacylated tRNA move to the P and E sites, respectively. Catalyzes the coordinated movement of the two tRNA molecules, the mRNA and conformational changes in the ribosome. The sequence is that of Elongation factor G, mitochondrial (mef1) from Emericella nidulans (strain FGSC A4 / ATCC 38163 / CBS 112.46 / NRRL 194 / M139) (Aspergillus nidulans).